Reading from the N-terminus, the 133-residue chain is Small ribosomal subunit protein uS8 (133 aa).

The interval 1–28 (MANHDPISDMLTRIRNASEKRHEKTKVP) is disordered. Basic and acidic residues predominate over residues 16–26 (NASEKRHEKTK).

Belongs to the universal ribosomal protein uS8 family. Part of the 30S ribosomal subunit. Contacts proteins S5 and S12.

Functionally, one of the primary rRNA binding proteins, it binds directly to 16S rRNA central domain where it helps coordinate assembly of the platform of the 30S subunit. The sequence is that of Small ribosomal subunit protein uS8 from Prochlorococcus marinus (strain NATL2A).